The following is a 66-amino-acid chain: Large ribosomal subunit protein bL33c (66 aa).

Component of the chloroplast large ribosomal subunit (LSU). Mature 70S chloroplast ribosomes of higher plants consist of a small (30S) and a large (50S) subunit. The 30S small subunit contains 1 molecule of ribosomal RNA (16S rRNA) and 24 different proteins. The 50S large subunit contains 3 rRNA molecules (23S, 5S and 4.5S rRNA) and 33 different proteins.

It is found in the plastid. It localises to the chloroplast. In terms of biological role, component of the chloroplast ribosome (chloro-ribosome), a dedicated translation machinery responsible for the synthesis of chloroplast genome-encoded proteins, including proteins of the transcription and translation machinery and components of the photosynthetic apparatus. This Spinacia oleracea (Spinach) protein is Large ribosomal subunit protein bL33c (rpl33).